A 319-amino-acid chain; its full sequence is Cytochrome c biogenesis protein CcsA (319 aa).

A run of 8 helical transmembrane segments spans residues 11–31, 34–54, 71–91, 97–117, 142–162, 227–247, 254–274, and 288–308; these read VNFA…SLAF, ISGL…ALAL, LYES…FIES, LIGA…SLAL, IMMI…LFLI, IIGL…VWAN, WSWD…AAYL, and AILA…VNFL.

Belongs to the CcmF/CycK/Ccl1/NrfE/CcsA family. In terms of assembly, may interact with Ccs1.

Its subcellular location is the plastid. It is found in the chloroplast thylakoid membrane. Functionally, required during biogenesis of c-type cytochromes (cytochrome c6 and cytochrome f) at the step of heme attachment. This Porphyra purpurea (Red seaweed) protein is Cytochrome c biogenesis protein CcsA.